The chain runs to 307 residues: Protein FAM76A (307 aa).

Disordered regions lie at residues 161-181 and 287-307; these read SRLSSGSHYNSQKTLSTSSIQ and KQAAALSKGKKPEKSGAITSP. Residues 217 to 297 are a coiled coil; sequence IIAQLKEEVA…QAAALSKGKK (81 aa).

It belongs to the FAM76 family.

This is Protein FAM76A (FAM76A) from Gallus gallus (Chicken).